Consider the following 143-residue polypeptide: UPF0292 protein Mbar_A0484 (143 aa).

Positions 28-109 (GAIIIVEGKR…KPELEIRNKL (82 aa)) constitute a Toprim domain. The Mg(2+) site is built by Glu-34, Asp-78, and Asp-80.

It belongs to the UPF0292 family. Mg(2+) is required as a cofactor.

This chain is UPF0292 protein Mbar_A0484, found in Methanosarcina barkeri (strain Fusaro / DSM 804).